A 463-amino-acid polypeptide reads, in one-letter code: Fumarate hydratase class II (463 aa).

Substrate-binding positions include S97 to T99, H128 to D131, S138 to N140, and T186. The active-site Proton donor/acceptor is H187. S317 is an active-site residue. Residues S318 and K323–N325 each bind substrate.

This sequence belongs to the class-II fumarase/aspartase family. Fumarase subfamily. As to quaternary structure, homotetramer.

The protein localises to the cytoplasm. The catalysed reaction is (S)-malate = fumarate + H2O. The protein operates within carbohydrate metabolism; tricarboxylic acid cycle; (S)-malate from fumarate: step 1/1. Its function is as follows. Involved in the TCA cycle. Catalyzes the stereospecific interconversion of fumarate to L-malate. In Helicobacter pylori (strain ATCC 700392 / 26695) (Campylobacter pylori), this protein is Fumarate hydratase class II.